Here is a 533-residue protein sequence, read N- to C-terminus: uncharacterized protein (533 aa).

A signal peptide spans 1–21 (MVKVWKIGFGVFLPTALLFSA). Residue C22 is the site of N-palmitoyl cysteine attachment. A lipid anchor (S-diacylglycerol cysteine) is attached at C22. The segment at 91-111 (LSKNKEGQTASQTRSSSEQTT) is disordered. Residues 97–111 (GQTASQTRSSSEQTT) show a composition bias toward polar residues.

This sequence belongs to the MG067/MG068/MG395 family.

It localises to the cell membrane. This is an uncharacterized protein from Mycoplasma pneumoniae (strain ATCC 29342 / M129 / Subtype 1) (Mycoplasmoides pneumoniae).